A 503-amino-acid chain; its full sequence is Glycerol kinase (503 aa).

ADP is bound at residue T14. The ATP site is built by T14, T15, and S16. A sn-glycerol 3-phosphate-binding site is contributed by T14. R18 contacts ADP. Sn-glycerol 3-phosphate contacts are provided by R84, E85, Y136, and D246. Residues R84, E85, Y136, D246, and Q247 each contribute to the glycerol site. Residues T268 and G311 each coordinate ADP. ATP-binding residues include T268, G311, Q315, and G412. G412 and N416 together coordinate ADP. Basic and acidic residues predominate over residues 468–481 (ERTFSPDSDNEKRE). The segment at 468-489 (ERTFSPDSDNEKRERRYKGWKK) is disordered.

The protein belongs to the FGGY kinase family.

The enzyme catalyses glycerol + ATP = sn-glycerol 3-phosphate + ADP + H(+). The protein operates within polyol metabolism; glycerol degradation via glycerol kinase pathway; sn-glycerol 3-phosphate from glycerol: step 1/1. With respect to regulation, inhibited by fructose 1,6-bisphosphate (FBP). Functionally, key enzyme in the regulation of glycerol uptake and metabolism. Catalyzes the phosphorylation of glycerol to yield sn-glycerol 3-phosphate. This chain is Glycerol kinase, found in Haemophilus influenzae (strain ATCC 51907 / DSM 11121 / KW20 / Rd).